The chain runs to 504 residues: Maturase K (504 aa).

The protein belongs to the intron maturase 2 family. MatK subfamily.

It is found in the plastid. The protein resides in the chloroplast. In terms of biological role, usually encoded in the trnK tRNA gene intron. Probably assists in splicing its own and other chloroplast group II introns. This is Maturase K from Impatiens capensis (Spotted jewelweed).